Reading from the N-terminus, the 603-residue chain is Carbon catabolite repressor protein 4 homolog 2 (603 aa).

A disordered region spans residues 115-136 (ENNANEDDDLNRNNSAGSGSLA). A compositionally biased stretch (low complexity) spans 126-136 (RNNSAGSGSLA). A Mg(2+)-binding site is contributed by glutamate 302.

This sequence belongs to the CCR4/nocturin family. As to quaternary structure, component of the CCR4-NOT complex, at least composed of CRR4 and CAF1 proteins. Mg(2+) serves as cofactor.

Its subcellular location is the nucleus. The protein localises to the cytoplasm. The enzyme catalyses Exonucleolytic cleavage of poly(A) to 5'-AMP.. Its function is as follows. Acts as a catalytic component of the CCR4-NOT core complex, which in the nucleus seems to be a general transcription factor, and in the cytoplasm the major mRNA deadenylase involved in mRNA turnover. The chain is Carbon catabolite repressor protein 4 homolog 2 (CCR4-2) from Arabidopsis thaliana (Mouse-ear cress).